A 602-amino-acid polypeptide reads, in one-letter code: Isocitrate dehydrogenase kinase/phosphatase (602 aa).

ATP is bound by residues 325–331 and lysine 346; that span reads APGIKGM. Aspartate 381 is a catalytic residue.

It belongs to the AceK family.

Its subcellular location is the cytoplasm. The enzyme catalyses L-seryl-[isocitrate dehydrogenase] + ATP = O-phospho-L-seryl-[isocitrate dehydrogenase] + ADP + H(+). Functionally, bifunctional enzyme which can phosphorylate or dephosphorylate isocitrate dehydrogenase (IDH) on a specific serine residue. This is a regulatory mechanism which enables bacteria to bypass the Krebs cycle via the glyoxylate shunt in response to the source of carbon. When bacteria are grown on glucose, IDH is fully active and unphosphorylated, but when grown on acetate or ethanol, the activity of IDH declines drastically concomitant with its phosphorylation. The polypeptide is Isocitrate dehydrogenase kinase/phosphatase (Paracidovorax citrulli (strain AAC00-1) (Acidovorax citrulli)).